The chain runs to 460 residues: ATP synthase subunit beta (460 aa).

Residue 150 to 157 (GGAGVGKT) participates in ATP binding.

The protein belongs to the ATPase alpha/beta chains family. As to quaternary structure, F-type ATPases have 2 components, CF(1) - the catalytic core - and CF(0) - the membrane proton channel. CF(1) has five subunits: alpha(3), beta(3), gamma(1), delta(1), epsilon(1). CF(0) has three main subunits: a(1), b(2) and c(9-12). The alpha and beta chains form an alternating ring which encloses part of the gamma chain. CF(1) is attached to CF(0) by a central stalk formed by the gamma and epsilon chains, while a peripheral stalk is formed by the delta and b chains.

It is found in the cell inner membrane. It carries out the reaction ATP + H2O + 4 H(+)(in) = ADP + phosphate + 5 H(+)(out). In terms of biological role, produces ATP from ADP in the presence of a proton gradient across the membrane. The catalytic sites are hosted primarily by the beta subunits. The chain is ATP synthase subunit beta from Escherichia coli (strain SMS-3-5 / SECEC).